The primary structure comprises 249 residues: MADS-box transcription factor 17 (249 aa).

One can recognise an MADS-box domain in the interval 1 to 61 (MGRGRVELKR…GKLYEFGSAG (61 aa)). The 91-residue stretch at 88–178 (HQSWYQEMSR…KNKLEAEADS (91 aa)) folds into the K-box domain. Residues 228–249 (ANPRSNGGGGDQNNNFVMGWPL) form a disordered region.

May interact with the K-box of MADS6. In terms of tissue distribution, expressed in the floral meristem, lodicule, palea, lemma, receptacle, empty glume, stamen, pistil, and ovule.

The protein resides in the nucleus. In terms of biological role, probable transcription factor. Plays minor but redundant roles with MADS6 in floral development. The protein is MADS-box transcription factor 17 (MADS17) of Oryza sativa subsp. japonica (Rice).